A 245-amino-acid polypeptide reads, in one-letter code: Large ribosomal subunit protein uL3 (245 aa).

Q151 carries the N5-methylglutamine modification. The interval 214-245 (KDAPQPGKYRLANSAAPQPAEADAASDTGAQA) is disordered. The segment covering 225–245 (ANSAAPQPAEADAASDTGAQA) has biased composition (low complexity).

It belongs to the universal ribosomal protein uL3 family. As to quaternary structure, part of the 50S ribosomal subunit. Forms a cluster with proteins L14 and L19. Methylated by PrmB.

In terms of biological role, one of the primary rRNA binding proteins, it binds directly near the 3'-end of the 23S rRNA, where it nucleates assembly of the 50S subunit. This Methylocella silvestris (strain DSM 15510 / CIP 108128 / LMG 27833 / NCIMB 13906 / BL2) protein is Large ribosomal subunit protein uL3.